Consider the following 552-residue polypeptide: Urocanate hydratase (552 aa).

NAD(+)-binding positions include 49 to 50 (GG), glutamine 127, 173 to 175 (GMG), aspartate 193, 239 to 240 (NA), 260 to 264 (QTSAH), 270 to 271 (YI), and tyrosine 319. The active site involves cysteine 407. Glycine 489 contacts NAD(+).

This sequence belongs to the urocanase family. NAD(+) is required as a cofactor.

It is found in the cytoplasm. It carries out the reaction 4-imidazolone-5-propanoate = trans-urocanate + H2O. It functions in the pathway amino-acid degradation; L-histidine degradation into L-glutamate; N-formimidoyl-L-glutamate from L-histidine: step 2/3. Functionally, catalyzes the conversion of urocanate to 4-imidazolone-5-propionate. This Bacillus cereus (strain 03BB102) protein is Urocanate hydratase.